The sequence spans 226 residues: PKHD-type hydroxylase Sfri_0612 (226 aa).

Residues 77 to 177 (KIFPPCFNRY…RIAAITWMQS (101 aa)) form the Fe2OG dioxygenase domain. Residues His95, Asp97, and His158 each contribute to the Fe cation site. 2-oxoglutarate is bound at residue Arg168.

Requires Fe(2+) as cofactor. The cofactor is L-ascorbate.

This chain is PKHD-type hydroxylase Sfri_0612, found in Shewanella frigidimarina (strain NCIMB 400).